Reading from the N-terminus, the 1375-residue chain is DNA-directed RNA polymerase subunit beta (1375 aa).

The protein belongs to the RNA polymerase beta chain family. In terms of assembly, the RNAP catalytic core consists of 2 alpha, 1 beta, 1 beta' and 1 omega subunit. When a sigma factor is associated with the core the holoenzyme is formed, which can initiate transcription.

The enzyme catalyses RNA(n) + a ribonucleoside 5'-triphosphate = RNA(n+1) + diphosphate. Functionally, DNA-dependent RNA polymerase catalyzes the transcription of DNA into RNA using the four ribonucleoside triphosphates as substrates. The protein is DNA-directed RNA polymerase subunit beta of Oleidesulfovibrio alaskensis (strain ATCC BAA-1058 / DSM 17464 / G20) (Desulfovibrio alaskensis).